We begin with the raw amino-acid sequence, 1405 residues long: DNA-directed RNA polymerase subunit beta' (1405 aa).

C70, C72, C85, and C88 together coordinate Zn(2+). Mg(2+) contacts are provided by D460, D462, and D464. Positions 814, 888, 895, and 898 each coordinate Zn(2+).

The protein belongs to the RNA polymerase beta' chain family. As to quaternary structure, the RNAP catalytic core consists of 2 alpha, 1 beta, 1 beta' and 1 omega subunit. When a sigma factor is associated with the core the holoenzyme is formed, which can initiate transcription. Mg(2+) serves as cofactor. Zn(2+) is required as a cofactor.

The catalysed reaction is RNA(n) + a ribonucleoside 5'-triphosphate = RNA(n+1) + diphosphate. DNA-dependent RNA polymerase catalyzes the transcription of DNA into RNA using the four ribonucleoside triphosphates as substrates. The chain is DNA-directed RNA polymerase subunit beta' from Shewanella oneidensis (strain ATCC 700550 / JCM 31522 / CIP 106686 / LMG 19005 / NCIMB 14063 / MR-1).